We begin with the raw amino-acid sequence, 130 residues long: Small ribosomal subunit protein uS9 (130 aa).

This sequence belongs to the universal ribosomal protein uS9 family.

The chain is Small ribosomal subunit protein uS9 from Pectobacterium atrosepticum (strain SCRI 1043 / ATCC BAA-672) (Erwinia carotovora subsp. atroseptica).